We begin with the raw amino-acid sequence, 348 residues long: Phospho-2-dehydro-3-deoxyheptonate aldolase, Trp-sensitive (348 aa).

This sequence belongs to the class-I DAHP synthase family.

The catalysed reaction is D-erythrose 4-phosphate + phosphoenolpyruvate + H2O = 7-phospho-2-dehydro-3-deoxy-D-arabino-heptonate + phosphate. Its pathway is metabolic intermediate biosynthesis; chorismate biosynthesis; chorismate from D-erythrose 4-phosphate and phosphoenolpyruvate: step 1/7. In terms of biological role, stereospecific condensation of phosphoenolpyruvate (PEP) and D-erythrose-4-phosphate (E4P) giving rise to 3-deoxy-D-arabino-heptulosonate-7-phosphate (DAHP). This Buchnera aphidicola subsp. Schizaphis graminum (strain Sg) protein is Phospho-2-dehydro-3-deoxyheptonate aldolase, Trp-sensitive (aroH).